Reading from the N-terminus, the 406-residue chain is MDGSHSAALQLQQLPPTSSSSAMSEASFSYKENLIGALLAIFGHLVVSIALNLQKYCHIRLAGSKDPRAYFKTKTWWLGLFLMLLGELGVFASYAFAPLSLIVPLSAVSVIASAIIGIIFIKEKWKPKDFLRRYILSFVGCGLAVVGTYLLVTFAPNSREKMTGENVTRHLVSWPFLLYMLVEIILFCLLLYFYKEKNANNIVVILLLVALLGSMTVVTVKAVAGMLVLSIQGNLQLDYPIFYVMFVCMVATAVYQAAFLSQASQMYDSSLIASVGYILSTTIAITAGAIFYLDFIGEDVLHICMFALGCLIAFLGVFLITRNRKKAIPFEPYISMDAMPGMQNMHDKGMTVQPELKASFSYGALENNDNISEIYAPATLPVMQEEHGSRSASGVPYRVLEHTKKE.

4 helical membrane passes run 33-53 (NLIGALLAIFGHLVVSIALNL), 76-96 (WWLGLFLMLLGELGVFASYAF), 101-121 (LIVPLSAVSVIASAIIGIIFI), and 135-155 (ILSFVGCGLAVVGTYLLVTFA). An N-linked (GlcNAc...) asparagine glycan is attached at Asn-166. The next 5 membrane-spanning stretches (helical) occupy residues 171–191 (LVSWPFLLYMLVEIILFCLLL), 202–222 (IVVILLLVALLGSMTVVTVKA), 240–260 (PIFYVMFVCMVATAVYQAAFL), 271–291 (LIASVGYILSTTIAITAGAIF), and 300–320 (VLHICMFALGCLIAFLGVFLI). Ser-372 bears the Phosphoserine mark.

It belongs to the NIPA family.

Its subcellular location is the membrane. The sequence is that of NIPA-like protein 3 (NIPAL3) from Pongo abelii (Sumatran orangutan).